The primary structure comprises 91 residues: Small ribosomal subunit protein uS19 (91 aa).

Belongs to the universal ribosomal protein uS19 family.

Functionally, protein S19 forms a complex with S13 that binds strongly to the 16S ribosomal RNA. This Acinetobacter baumannii (strain AB307-0294) protein is Small ribosomal subunit protein uS19.